Reading from the N-terminus, the 445-residue chain is tRNA-2-methylthio-N(6)-dimethylallyladenosine synthase (445 aa).

An MTTase N-terminal domain is found at 9 to 125; it reads LKYRILTYGC…LPYLIARAKE (117 aa). Positions 18, 54, 88, 162, 166, and 169 each coordinate [4Fe-4S] cluster. One can recognise a Radical SAM core domain in the interval 148 to 378; that stretch reads RKPGLSAFVN…NRRQYQIATE (231 aa). The TRAM domain occupies 381 to 444; it reads QELQGSIQEV…TFSLFGEIFN (64 aa).

This sequence belongs to the methylthiotransferase family. MiaB subfamily. In terms of assembly, monomer. It depends on [4Fe-4S] cluster as a cofactor.

The protein localises to the cytoplasm. The enzyme catalyses N(6)-dimethylallyladenosine(37) in tRNA + (sulfur carrier)-SH + AH2 + 2 S-adenosyl-L-methionine = 2-methylsulfanyl-N(6)-dimethylallyladenosine(37) in tRNA + (sulfur carrier)-H + 5'-deoxyadenosine + L-methionine + A + S-adenosyl-L-homocysteine + 2 H(+). Catalyzes the methylthiolation of N6-(dimethylallyl)adenosine (i(6)A), leading to the formation of 2-methylthio-N6-(dimethylallyl)adenosine (ms(2)i(6)A) at position 37 in tRNAs that read codons beginning with uridine. This is tRNA-2-methylthio-N(6)-dimethylallyladenosine synthase from Syntrophomonas wolfei subsp. wolfei (strain DSM 2245B / Goettingen).